The following is a 478-amino-acid chain: Cysteine--tRNA ligase (478 aa).

Position 37 (Cys37) interacts with Zn(2+). A 'HIGH' region motif is present at residues 39–49 (PTVYHYAHIGN). Zn(2+) is bound by residues Cys224, His249, and Glu253. The 'KMSKS' region motif lies at 281–285 (KMSKS). Residue Lys284 coordinates ATP.

The protein belongs to the class-I aminoacyl-tRNA synthetase family. As to quaternary structure, monomer. The cofactor is Zn(2+).

The protein resides in the cytoplasm. The catalysed reaction is tRNA(Cys) + L-cysteine + ATP = L-cysteinyl-tRNA(Cys) + AMP + diphosphate. The chain is Cysteine--tRNA ligase from Protochlamydia amoebophila (strain UWE25).